A 210-amino-acid chain; its full sequence is dITP/XTP pyrophosphatase (210 aa).

16–21 (SNNKGK) provides a ligand contact to substrate. Aspartate 79 (proton acceptor) is an active-site residue. Aspartate 79 contributes to the Mg(2+) binding site. Residues serine 80, 166–169 (FGYD), lysine 189, and 194–195 (HR) contribute to the substrate site.

The protein belongs to the HAM1 NTPase family. In terms of assembly, homodimer. Mg(2+) is required as a cofactor.

It catalyses the reaction XTP + H2O = XMP + diphosphate + H(+). The enzyme catalyses dITP + H2O = dIMP + diphosphate + H(+). It carries out the reaction ITP + H2O = IMP + diphosphate + H(+). Its function is as follows. Pyrophosphatase that catalyzes the hydrolysis of nucleoside triphosphates to their monophosphate derivatives, with a high preference for the non-canonical purine nucleotides XTP (xanthosine triphosphate), dITP (deoxyinosine triphosphate) and ITP. Seems to function as a house-cleaning enzyme that removes non-canonical purine nucleotides from the nucleotide pool, thus preventing their incorporation into DNA/RNA and avoiding chromosomal lesions. This is dITP/XTP pyrophosphatase from Acinetobacter baylyi (strain ATCC 33305 / BD413 / ADP1).